Consider the following 340-residue polypeptide: UPF0324 membrane protein BC_5174 (340 aa).

10 helical membrane-spanning segments follow: residues 13–35 (FGFS…LAEL), 40–59 (IMGQ…AAIG), 99–118 (VLVI…YGLT), 128–150 (GILT…APQV), 157–179 (TAVG…TLLY), 189–211 (YGVF…APGG), 218–240 (AVIV…GLWF), 255–277 (LPIP…GIIP), 279–301 (VVAG…GLGL), and 316–338 (FVAG…YALG).

Belongs to the UPF0324 family.

Its subcellular location is the cell membrane. The polypeptide is UPF0324 membrane protein BC_5174 (Bacillus cereus (strain ATCC 14579 / DSM 31 / CCUG 7414 / JCM 2152 / NBRC 15305 / NCIMB 9373 / NCTC 2599 / NRRL B-3711)).